The chain runs to 549 residues: ATP synthase subunit alpha (549 aa).

Residue 172–179 participates in ATP binding; it reads GDRKTGKT. The segment at 513-549 is disordered; the sequence is SSTGESVVPDEHVEAMDEEDLGKESVKVKKPAPQKKK. Positions 540–549 are enriched in basic residues; sequence VKKPAPQKKK.

This sequence belongs to the ATPase alpha/beta chains family. As to quaternary structure, F-type ATPases have 2 components, CF(1) - the catalytic core - and CF(0) - the membrane proton channel. CF(1) has five subunits: alpha(3), beta(3), gamma(1), delta(1), epsilon(1). CF(0) has three main subunits: a(1), b(2) and c(9-12). The alpha and beta chains form an alternating ring which encloses part of the gamma chain. CF(1) is attached to CF(0) by a central stalk formed by the gamma and epsilon chains, while a peripheral stalk is formed by the delta and b chains.

The protein localises to the cell membrane. The enzyme catalyses ATP + H2O + 4 H(+)(in) = ADP + phosphate + 5 H(+)(out). Its function is as follows. Produces ATP from ADP in the presence of a proton gradient across the membrane. The alpha chain is a regulatory subunit. The chain is ATP synthase subunit alpha from Mycobacterium marinum (strain ATCC BAA-535 / M).